The chain runs to 222 residues: Disulfide bond formation protein D (222 aa).

A signal peptide spans Met1–Gly36. Positions Asn37–Lys220 constitute a Thioredoxin domain. An intrachain disulfide couples Cys69 to Cys72.

The protein belongs to the thioredoxin family. DsbA subfamily.

The protein localises to the cell membrane. The protein resides in the membrane raft. In terms of biological role, required for the stabilization, possibly via formation of a disulfide bond, of the obligatory competence protein ComGC. May be required for the stability of secreted proteins with disulfide bonds. Not required for sporulation. In Bacillus subtilis (strain 168), this protein is Disulfide bond formation protein D (bdbD).